We begin with the raw amino-acid sequence, 972 residues long: Macrophage colony-stimulating factor 1 receptor (972 aa).

The first 19 residues, 1–19, serve as a signal peptide directing secretion; sequence MGPGVLLLLLVATAWHGQG. Residues 20 to 517 lie on the Extracellular side of the membrane; the sequence is IPVIEPSVPE…HPPDEFLFTP (498 aa). 5 Ig-like C2-type domains span residues 21 to 104, 107 to 197, 203 to 290, 299 to 399, and 402 to 502; these read PVIE…VKDP, PWNV…KVQK, PALT…HSTS, AYLN…LTLR, and PEVS…IPIS. 3 cysteine pairs are disulfide-bonded: C42–C84, C127–C177, and C224–C278. N-linked (GlcNAc...) asparagine glycans are attached at residues N45, N73, N153, N240, N275, N302, N335, N353, N412, N428, and N480. C419 and C485 are joined by a disulfide. Residues 518–538 form a helical membrane-spanning segment; sequence VVVACMSIMALLLLLLLLLLY. Over 539-972 the chain is Cytoplasmic; the sequence is KYKQKPKYQV…LLQPNNYQFC (434 aa). Positions 542 to 574 are regulatory juxtamembrane domain; that stretch reads QKPKYQVRWKIIESYEGNSYTFIDPTQLPYNEK. A phosphotyrosine; by autocatalysis mark is found at Y546 and Y561. The region spanning 582–910 is the Protein kinase domain; sequence LQFGKTLGAG…PTFQQICSFL (329 aa). Residues 588 to 596 and K616 each bind ATP; that span reads LGAGAFGKV. Residues Y699 and Y708 each carry the phosphotyrosine; by autocatalysis modification. S713 is modified (phosphoserine). At Y723 the chain carries Phosphotyrosine; by autocatalysis. D778 serves as the catalytic Proton acceptor. The segment at 796–818 is activation loop; sequence DFGLARDIMNDSNYIVKGNARLP. Phosphotyrosine; by autocatalysis is present on residues Y809 and Y923. A disordered region spans residues 918 to 950; it reads RRERDYTNLPSSSRSGGSGSSSSELEEESSSEH. Residues 928-940 are compositionally biased toward low complexity; that stretch reads SSSRSGGSGSSSS. Y969 carries the post-translational modification Phosphotyrosine; by autocatalysis.

Belongs to the protein kinase superfamily. Tyr protein kinase family. CSF-1/PDGF receptor subfamily. In terms of assembly, interacts with INPPL1/SHIP2 and THOC5. Monomer. Homodimer. Interacts with CSF1 and IL34. Interaction with dimeric CSF1 or IL34 leads to receptor homodimerization. Interacts (tyrosine phosphorylated) with PLCG2 (via SH2 domain). Interacts (tyrosine phosphorylated) with PIK3R1 (via SH2 domain). Interacts (tyrosine phosphorylated) with FYN, YES1 and SRC (via SH2 domain). Interacts (tyrosine phosphorylated) with CBL, GRB2 and SLA2. Post-translationally, autophosphorylated in response to CSF1 or IL34 binding. Phosphorylation at Tyr-561 is important for normal down-regulation of signaling by ubiquitination, internalization and degradation. Phosphorylation at Tyr-561 and Tyr-809 is important for interaction with SRC family members, including FYN, YES1 and SRC, and for subsequent activation of these protein kinases. Phosphorylation at Tyr-699 and Tyr-923 is important for interaction with GRB2. Phosphorylation at Tyr-723 is important for interaction with PIK3R1. Phosphorylation at Tyr-708 is important for normal receptor degradation. Phosphorylation at Tyr-723 and Tyr-809 is important for interaction with PLCG2. Phosphorylation at Tyr-969 is important for interaction with CBL. Dephosphorylation by PTPN2 negatively regulates downstream signaling and macrophage differentiation. In terms of processing, ubiquitinated. Becomes rapidly polyubiquitinated after autophosphorylation, leading to its degradation. Expressed in bone marrow and in differentiated blood mononuclear cells.

Its subcellular location is the cell membrane. The catalysed reaction is L-tyrosyl-[protein] + ATP = O-phospho-L-tyrosyl-[protein] + ADP + H(+). Its activity is regulated as follows. Present in an inactive conformation in the absence of bound ligand. CSF1 or IL34 binding leads to dimerization and activation by autophosphorylation on tyrosine residues. Inhibited by imatinib/STI-571 (Gleevec), dasatinib, sunitinib/SU11248, lestaurtinib/CEP-701, midostaurin/PKC-412, Ki20227, linifanib/ABT-869, Axitinib/AG013736, sorafenib/BAY 43-9006 and GW2580. Its function is as follows. Tyrosine-protein kinase that acts as a cell-surface receptor for CSF1 and IL34 and plays an essential role in the regulation of survival, proliferation and differentiation of hematopoietic precursor cells, especially mononuclear phagocytes, such as macrophages and monocytes. Promotes the release of pro-inflammatory chemokines in response to IL34 and CSF1, and thereby plays an important role in innate immunity and in inflammatory processes. Plays an important role in the regulation of osteoclast proliferation and differentiation, the regulation of bone resorption, and is required for normal bone and tooth development. Required for normal male and female fertility, and for normal development of milk ducts and acinar structures in the mammary gland during pregnancy. Promotes reorganization of the actin cytoskeleton, regulates formation of membrane ruffles, cell adhesion and cell migration, and promotes cancer cell invasion. Activates several signaling pathways in response to ligand binding, including the ERK1/2 and the JNK pathway. Phosphorylates PIK3R1, PLCG2, GRB2, SLA2 and CBL. Activation of PLCG2 leads to the production of the cellular signaling molecules diacylglycerol and inositol 1,4,5-trisphosphate, that then lead to the activation of protein kinase C family members, especially PRKCD. Phosphorylation of PIK3R1, the regulatory subunit of phosphatidylinositol 3-kinase, leads to activation of the AKT1 signaling pathway. Activated CSF1R also mediates activation of the MAP kinases MAPK1/ERK2 and/or MAPK3/ERK1, and of the SRC family kinases SRC, FYN and YES1. Activated CSF1R transmits signals both via proteins that directly interact with phosphorylated tyrosine residues in its intracellular domain, or via adapter proteins, such as GRB2. Promotes activation of STAT family members STAT3, STAT5A and/or STAT5B. Promotes tyrosine phosphorylation of SHC1 and INPP5D/SHIP-1. Receptor signaling is down-regulated by protein phosphatases, such as INPP5D/SHIP-1, that dephosphorylate the receptor and its downstream effectors, and by rapid internalization of the activated receptor. In the central nervous system, may play a role in the development of microglia macrophages. The sequence is that of Macrophage colony-stimulating factor 1 receptor (CSF1R) from Homo sapiens (Human).